The chain runs to 688 residues: PTS system glucoside-specific EIICBA component (688 aa).

The PTS EIIC type-1 domain maps to 3 to 427; it reads KKLFGQLQRI…FKLKTPGRED (425 aa). Helical transmembrane passes span 12-32, 81-101, 137-157, 182-202, 223-243, 284-304, 315-335, 340-360, 364-384, and 395-415; these read IGKA…LLAF, LGLA…YLIM, LVLG…MGAL, FVPI…SFAW, LTTF…LHHI, AFTT…AFAI, IVGG…ITEP, FLFV…TSFL, LLGV…ILYG, and LVIP…DFAI. In terms of domain architecture, PTS EIIB type-1 spans 438–519; it reads AKLPFDVLDA…AKIMSGEITK (82 aa). C460 acts as the Phosphocysteine intermediate; for EIIB activity in catalysis. The 105-residue stretch at 560-664 folds into the PTS EIIA type-1 domain; the sequence is DQVFAGKMMG…SIVTPMIITN (105 aa). H612 serves as the catalytic Tele-phosphohistidine intermediate; for EIIA activity.

The protein localises to the cell membrane. Functionally, the phosphoenolpyruvate-dependent sugar phosphotransferase system (sugar PTS), a major carbohydrate active -transport system, catalyzes the phosphorylation of incoming sugar substrates concomitantly with their translocation across the cell membrane. This system is involved in alpha- and beta-glucoside transport. The sequence is that of PTS system glucoside-specific EIICBA component (glcB) from Staphylococcus aureus (strain MRSA252).